Here is a 257-residue protein sequence, read N- to C-terminus: 1-(5-phosphoribosyl)-5-[(5-phosphoribosylamino)methylideneamino] imidazole-4-carboxamide isomerase (257 aa).

The Proton acceptor role is filled by Asp-8. Asp-129 acts as the Proton donor in catalysis.

This sequence belongs to the HisA/HisF family.

The protein resides in the cytoplasm. It carries out the reaction 1-(5-phospho-beta-D-ribosyl)-5-[(5-phospho-beta-D-ribosylamino)methylideneamino]imidazole-4-carboxamide = 5-[(5-phospho-1-deoxy-D-ribulos-1-ylimino)methylamino]-1-(5-phospho-beta-D-ribosyl)imidazole-4-carboxamide. It functions in the pathway amino-acid biosynthesis; L-histidine biosynthesis; L-histidine from 5-phospho-alpha-D-ribose 1-diphosphate: step 4/9. The chain is 1-(5-phosphoribosyl)-5-[(5-phosphoribosylamino)methylideneamino] imidazole-4-carboxamide isomerase from Rippkaea orientalis (strain PCC 8801 / RF-1) (Cyanothece sp. (strain PCC 8801)).